Reading from the N-terminus, the 482-residue chain is ATP synthase subunit beta (482 aa).

161 to 168 (GGAGVGKT) provides a ligand contact to ATP.

This sequence belongs to the ATPase alpha/beta chains family. In terms of assembly, F-type ATPases have 2 components, CF(1) - the catalytic core - and CF(0) - the membrane proton channel. CF(1) has five subunits: alpha(3), beta(3), gamma(1), delta(1), epsilon(1). CF(0) has four main subunits: a(1), b(1), b'(1) and c(9-12).

It localises to the cellular thylakoid membrane. The catalysed reaction is ATP + H2O + 4 H(+)(in) = ADP + phosphate + 5 H(+)(out). Its function is as follows. Produces ATP from ADP in the presence of a proton gradient across the membrane. The catalytic sites are hosted primarily by the beta subunits. In Microcystis aeruginosa (strain NIES-843 / IAM M-2473), this protein is ATP synthase subunit beta.